The sequence spans 898 residues: Tight junction protein ZO-3 (898 aa).

In terms of domain architecture, PDZ 1 spans 11–93 (TATLCRDPRR…LANITVKRPR (83 aa)). Residues 98-165 (PATKAGTSGR…SPGGNSEANG (68 aa)) form a disordered region. Phosphoserine occurs at positions 128, 156, 161, 195, and 313. The PDZ 2 domain occupies 187-264 (SVLVRRTESE…KLTLLVLRDR (78 aa)). Positions 295–368 (LSQAVPSHVP…QSAEDRGYSP (74 aa)) are disordered. The span at 312-349 (RSLDSDGTDSPRDSPPLRRENSLDSRTISEPDAPRHSS) shows a compositional bias: basic and acidic residues. Thr-319 bears the Phosphothreonine mark. Residues Ser-321 and Ser-360 each carry the phosphoserine modification. One can recognise a PDZ 3 domain in the interval 369–435 (DSRVVRFHKG…LTREEAVQFL (67 aa)). Positions 464–538 (GDSFYIRTHF…PNQSRAEQLA (75 aa)) constitute an SH3 domain. Residues 569–750 (LRRGAKKSTQ…WYQELKAVVR (182 aa)) form the Guanylate kinase-like domain. The residue at position 580 (Ser-580) is a Phosphoserine. Positions 759–898 (TAEDQLDNSS…GYDWGPATDL (140 aa)) are disordered. The span at 762 to 772 (DQLDNSSEDNL) shows a compositional bias: acidic residues. A compositionally biased stretch (low complexity) spans 780–790 (ADSSADLSCDS). The segment covering 796–814 (YETDGEGYTDGEGYTDVDE) has biased composition (acidic residues). Residues 831-841 (EEPRSPRDHGR) show a composition bias toward basic and acidic residues. A phosphoserine mark is found at Ser-835, Ser-884, and Ser-885.

This sequence belongs to the MAGUK family. As to quaternary structure, heterodimer with TJP1. Interacts with UBN1. Interacts with occludin OCLN and claudins. Interacts with PATJ. Interacts with FASLG. Interacts with CCND1. Post-translationally, phosphorylated.

Its subcellular location is the cell membrane. The protein resides in the cell junction. It localises to the tight junction. It is found in the nucleus. TJP1, TJP2, and TJP3 are closely related scaffolding proteins that link tight junction (TJ) transmembrane proteins such as claudins, junctional adhesion molecules, and occludin to the actin cytoskeleton. The tight junction acts to limit movement of substances through the paracellular space and as a boundary between the compositionally distinct apical and basolateral plasma membrane domains of epithelial and endothelial cells. Binds and recruits PATJ to tight junctions where it connects and stabilizes apical and lateral components of tight junctions. Promotes cell-cycle progression through the sequestration of cyclin D1 (CCND1) at tight junctions during mitosis which prevents CCND1 degradation during M-phase and enables S-phase transition. With TJP1 and TJP2, participates in the junctional retention and stability of the transcription factor DBPA, but is not involved in its shuttling to the nucleus. Contrary to TJP2, TJP3 is dispensable for individual viability, embryonic development, epithelial differentiation, and the establishment of TJs, at least in the laboratory environment. The sequence is that of Tight junction protein ZO-3 (TJP3) from Canis lupus familiaris (Dog).